Here is an 88-residue protein sequence, read N- to C-terminus: Beta-insect excitatory toxin 2 (88 aa).

Positions 1-18 (MKFLLLFLVVLPIMGVLG) are cleaved as a signal peptide. Residues 20-83 (KNGYAVDSSG…ISDTRKSYCD (64 aa)) form the LCN-type CS-alpha/beta domain. 4 cysteine pairs are disulfide-bonded: Cys34–Cys55, Cys40–Cys60, Cys44–Cys62, and Cys56–Cys82.

Belongs to the long (4 C-C) scorpion toxin superfamily. Sodium channel inhibitor family. Beta subfamily. As to expression, expressed by the venom gland.

The protein localises to the secreted. In terms of biological role, excitatory insect beta-toxins induce a spastic paralysis. They bind voltage-independently at site-4 of sodium channels (Nav) and shift the voltage of activation toward more negative potentials thereby affecting sodium channel activation and promoting spontaneous and repetitive firing. This toxin is active only on insects. This Androctonus australis (Sahara scorpion) protein is Beta-insect excitatory toxin 2.